Consider the following 533-residue polypeptide: Calcium/calmodulin-dependent protein kinase type II (533 aa).

ATP is bound by residues 18-26 and lysine 41; that span reads LGKGAFSVV. Aspartate 134 acts as the Proton acceptor in catalysis. Position 284 is a phosphothreonine; by autocatalysis (threonine 284). Composition is skewed to polar residues over residues 316 to 345 and 377 to 391; these read TSDS…QPTS and PPST…SQTI. Disordered stretches follow at residues 316-347 and 369-400; these read TSDS…TSPA and LLNK…EKAQ.

Belongs to the protein kinase superfamily. CAMK Ser/Thr protein kinase family. CaMK subfamily. Dodecamer. Subunits are tightly packed around a central ring-shaped scaffold with extensive contacts between the regulatory segment of one kinase and the catalytic domain of another enabling cooperative activation of a subunit by the adjacent molecule. Interacts with and phosphorylates daf-16; the interaction promotes daf-16 nuclear localization. Interacts with egl-2 and tir-1. Interacts with nsy-1. Mg(2+) is required as a cofactor.

It localises to the cytoplasm. The protein resides in the cell projection. It is found in the axon. Its subcellular location is the perikaryon. It carries out the reaction L-seryl-[protein] + ATP = O-phospho-L-seryl-[protein] + ADP + H(+). It catalyses the reaction L-threonyl-[protein] + ATP = O-phospho-L-threonyl-[protein] + ADP + H(+). Its activity is regulated as follows. Ca(2+)/calmodulin binding removes an autoinhibitory regulatory segment located C-terminal to the kinase domain. This releases the catalytic activity of the enzyme and makes accessible a regulatory residue Thr-284. Phosphorylation of Thr-284 by another kinase domain within the oligomeric holoenzyme keeps CaMKII active in the absence of Ca(2+)/calmodulin by preventing the rebinding of the regulatory segment to the kinase domain and by increasing the affinity of calmodulin for the enzyme. Can respond to high-frequency Ca(2+) pulses to become Ca(2+) independent. Its function is as follows. Role in locomotion and neuronal cell fate specification. Required for the regulation of synaptic density, egg laying, defecation, and meiotic maturation. Required for viability under chronic osmotic stress in which it acts downstream of osr-1. Regulates the synaptic trafficking of glr-1. Bidirectional modulator of neurotransmitter release with negative modulatory effects mainly mediated via slo-1 activation. May suppress the functional response to an internal pacemaker, perhaps by modulating the activity of the IP3 receptor. This Caenorhabditis briggsae protein is Calcium/calmodulin-dependent protein kinase type II.